We begin with the raw amino-acid sequence, 1007 residues long: Lysosomal alpha-mannosidase (1007 aa).

An N-terminal signal peptide occupies residues 1-47 (MGASVLPLGLGAGDCQSSSGRRMSACLPRTALSFLLSLLLATPGARA). 2 disulfides stabilise this stretch: Cys53–Cys356 and Cys266–Cys271. 2 residues coordinate Zn(2+): His70 and Asp72. Asn131 is a glycosylation site (N-linked (GlcNAc...) asparagine). Asp194 lines the Zn(2+) pocket. Asp194 (nucleophile) is an active-site residue. N-linked (GlcNAc...) asparagine glycans are attached at residues Asn308, Asn343, and Asn365. Intrachain disulfides connect Cys410–Cys470 and Cys491–Cys499. His444 contributes to the Zn(2+) binding site. N-linked (GlcNAc...) asparagine glycans are attached at residues Asn495, Asn540, Asn639, Asn686, Asn760, and Asn927.

This sequence belongs to the glycosyl hydrolase 38 family. Requires Zn(2+) as cofactor.

The protein localises to the lysosome. It carries out the reaction Hydrolysis of terminal, non-reducing alpha-D-mannose residues in alpha-D-mannosides.. Its function is as follows. Necessary for the catabolism of N-linked carbohydrates released during glycoprotein turnover. The polypeptide is Lysosomal alpha-mannosidase (MAN2B1) (Cavia porcellus (Guinea pig)).